The primary structure comprises 469 residues: Phosphatidylinositol 4-kinase type 2-alpha (469 aa).

Disordered regions lie at residues 1-30 and 50-72; these read MDET…ATVP and TATS…DQER. The segment covering 16 to 25 has biased composition (polar residues); that stretch reads EYSYQSQCSP. The span at 50 to 60 shows a compositional bias: low complexity; sequence TATSCGSAASG. The 329-residue stretch at 115 to 443 folds into the PI3K/PI4K catalytic domain; that stretch reads DILPERISQG…VQTPPVIVET (329 aa). Residues 121 to 127 form a G-loop region; sequence ISQGSSG. Residues 122 to 128 and Lys143 contribute to the ATP site; that span reads SQGSSGS. An important for substrate binding region spans residues 148–150; that stretch reads EPY. The important for interaction with membranes stretch occupies residues 156-169; the sequence is KWTKWLQKLCCPCC. 4 S-palmitoyl cysteine lipidation sites follow: Cys165, Cys166, Cys168, and Cys169. 252–255 serves as a coordination point for ATP; that stretch reads QIFV. The interval 259–267 is important for interaction with membranes; sequence KDADYWLRR. The segment at 296–304 is catalytic loop; the sequence is RNTDRGNDN. An activation loop region spans residues 334–354; that stretch reads AIDNGLAFPLKHPDSWRAYPF. Asp336 is a binding site for ATP. The tract at residues 349 to 358 is important for interaction with membranes; the sequence is WRAYPFYWAW.

Belongs to the PI3/PI4-kinase family. Type II PI4K subfamily.

It is found in the golgi apparatus. The protein resides in the trans-Golgi network membrane. Its subcellular location is the membrane raft. The protein localises to the endosome. It localises to the endosome membrane. It is found in the cytoplasmic vesicle. The protein resides in the cell projection. Its subcellular location is the dendrite. The protein localises to the presynaptic cell membrane. It localises to the synapse. It is found in the synaptosome. The protein resides in the mitochondrion. Its subcellular location is the membrane. The protein localises to the cell membrane. It localises to the perikaryon. It is found in the neuron projection. The catalysed reaction is a 1,2-diacyl-sn-glycero-3-phospho-(1D-myo-inositol) + ATP = a 1,2-diacyl-sn-glycero-3-phospho-(1D-myo-inositol 4-phosphate) + ADP + H(+). Its function is as follows. Membrane-bound phosphatidylinositol-4 kinase (PI4-kinase) that catalyzes the phosphorylation of phosphatidylinositol (PI) to phosphatidylinositol 4-phosphate (PI4P), a lipid that plays important roles in endocytosis, Golgi function, protein sorting and membrane trafficking. Besides, phosphorylation of phosphatidylinositol (PI) to phosphatidylinositol 4-phosphate (PI4P) is the first committed step in the generation of phosphatidylinositol 4,5-bisphosphate (PIP2), a precursor of the second messenger inositol 1,4,5-trisphosphate (InsP3). This Xenopus laevis (African clawed frog) protein is Phosphatidylinositol 4-kinase type 2-alpha (pi4k2a).